Here is a 210-residue protein sequence, read N- to C-terminus: Ribulose-phosphate 3-epimerase (210 aa).

Serine 9 is a binding site for substrate. A divalent metal cation-binding residues include histidine 34, aspartate 36, and histidine 68. Aspartate 36 functions as the Proton acceptor in the catalytic mechanism. Residues histidine 68, 144-147, 177-179, and 199-200 contribute to the substrate site; these read GFGG, DGG, and GS. Position 177 (aspartate 177) interacts with a divalent metal cation. The Proton donor role is filled by aspartate 177.

It belongs to the ribulose-phosphate 3-epimerase family. A divalent metal cation serves as cofactor.

It carries out the reaction D-ribulose 5-phosphate = D-xylulose 5-phosphate. It participates in carbohydrate degradation. Its function is as follows. Catalyzes the reversible epimerization of D-ribulose 5-phosphate to D-xylulose 5-phosphate. This Serratia marcescens protein is Ribulose-phosphate 3-epimerase.